Consider the following 101-residue polypeptide: Ubiquitin-related modifier 1 homolog (101 aa).

Gly101 carries the post-translational modification 1-thioglycine. Residue Gly101 forms a Glycyl lysine isopeptide (Gly-Lys) (interchain with K-? in acceptor proteins) linkage.

Belongs to the URM1 family. As to quaternary structure, interacts with cer. In terms of processing, C-terminal thiocarboxylation occurs in 2 steps, it is first acyl-adenylated (-COAMP) via the hesA/moeB/thiF part of the MOCS3 homolog, then thiocarboxylated (-COSH) via the rhodanese domain of the MOCS3 homolog.

Its subcellular location is the cytoplasm. It participates in tRNA modification; 5-methoxycarbonylmethyl-2-thiouridine-tRNA biosynthesis. Functionally, acts as a sulfur carrier required for 2-thiolation of mcm(5)S(2)U at tRNA wobble positions of cytosolic tRNA(Lys), tRNA(Glu) and tRNA(Gln). Serves as sulfur donor in tRNA 2-thiolation reaction by being thiocarboxylated (-COSH) at its C-terminus by MOCS3. The sulfur is then transferred to tRNA to form 2-thiolation of mcm(5)S(2)U. Also acts as a ubiquitin-like protein (UBL) that is covalently conjugated via an isopeptide bond to lysine residues of target proteins such as Prx2/Jafrac1, Ciao1, Eip71CD and GILT1. The thiocarboxylated form serves as substrate for conjugation and oxidative stress specifically induces the formation of UBL-protein conjugates. The polypeptide is Ubiquitin-related modifier 1 homolog (Drosophila ananassae (Fruit fly)).